The primary structure comprises 302 residues: Tetrahydromethanopterin S-methyltransferase subunit E (302 aa).

The next 6 membrane-spanning stretches (helical) occupy residues 3–23 (PLISMGVLALIGVAATIAGAS), 86–106 (PLFALVFGSLIAACVHATFAV), 132–152 (ITPIMGYAFITTFCILVVSYL), 155–175 (VVLGHPFPLTMLAFIWGITIG), 233–253 (PVTGLAFGMTVFLGSWITTIF), and 259–279 (LGWLSVIAGIVIVFILIIWNW).

It belongs to the MtrE family. As to quaternary structure, the complex is composed of 8 subunits; MtrA, MtrB, MtrC, MtrD, MtrE, MtrF, MtrG and MtrH.

It is found in the cell membrane. The enzyme catalyses 5-methyl-5,6,7,8-tetrahydromethanopterin + coenzyme M + 2 Na(+)(in) = 5,6,7,8-tetrahydromethanopterin + methyl-coenzyme M + 2 Na(+)(out). It functions in the pathway one-carbon metabolism; methanogenesis from CO(2); methyl-coenzyme M from 5,10-methylene-5,6,7,8-tetrahydromethanopterin: step 2/2. In terms of biological role, part of a complex that catalyzes the formation of methyl-coenzyme M and tetrahydromethanopterin from coenzyme M and methyl-tetrahydromethanopterin. This is an energy-conserving, sodium-ion translocating step. This Methanosarcina barkeri (strain Fusaro / DSM 804) protein is Tetrahydromethanopterin S-methyltransferase subunit E.